We begin with the raw amino-acid sequence, 689 residues long: Glycine--tRNA ligase beta subunit (689 aa).

This sequence belongs to the class-II aminoacyl-tRNA synthetase family. Tetramer of two alpha and two beta subunits.

It is found in the cytoplasm. It carries out the reaction tRNA(Gly) + glycine + ATP = glycyl-tRNA(Gly) + AMP + diphosphate. In Sodalis glossinidius (strain morsitans), this protein is Glycine--tRNA ligase beta subunit.